The following is a 346-amino-acid chain: tRNA N6-adenosine threonylcarbamoyltransferase (346 aa).

Fe cation-binding residues include His111 and His115. Residues 134–138 (LVSGG), Asp167, Gly180, Asp184, and Asn279 each bind substrate. Asp307 contributes to the Fe cation binding site.

Belongs to the KAE1 / TsaD family. Fe(2+) serves as cofactor.

The protein resides in the cytoplasm. The catalysed reaction is L-threonylcarbamoyladenylate + adenosine(37) in tRNA = N(6)-L-threonylcarbamoyladenosine(37) in tRNA + AMP + H(+). Its function is as follows. Required for the formation of a threonylcarbamoyl group on adenosine at position 37 (t(6)A37) in tRNAs that read codons beginning with adenine. Is involved in the transfer of the threonylcarbamoyl moiety of threonylcarbamoyl-AMP (TC-AMP) to the N6 group of A37, together with TsaE and TsaB. TsaD likely plays a direct catalytic role in this reaction. In Gloeothece citriformis (strain PCC 7424) (Cyanothece sp. (strain PCC 7424)), this protein is tRNA N6-adenosine threonylcarbamoyltransferase.